Reading from the N-terminus, the 2211-residue chain is Coagulation factor V (2211 aa).

Positions 1-28 are cleaved as a signal peptide; that stretch reads MFLACPGFWVLVVLGSSWAGWGNLGAEA. Plastocyanin-like domains lie at 30–193, 203–327, 348–525, and 535–686; these read KLRQ…LLIC, TQKM…IDIK, KRWE…LLIC, and IQRA…FRDA. F5/8 type A domains follow at residues 30–327 and 348–686; these read KLRQ…IDIK and KRWE…FRDA. Ca(2+) is bound by residues D139 and D140. An intrachain disulfide couples C167 to C193. N-linked (GlcNAc...) asparagine glycosylation is found at N225, N239, N297, N382, and N460. A disulfide bridge links C248 with C329. Cysteines 499 and 525 form a disulfide. Residues N553 and N587 are each glycosylated (N-linked (GlcNAc...) asparagine). A disulfide bond links C607 and C688. At T644 the chain carries Phosphothreonine. The segment at 696–1564 is b; that stretch reads SYEIIYEPSG…PDNIAAWYLR (869 aa). Sulfotyrosine occurs at positions 697, 701, and 730. A propeptide spans 742 to 1564 (activation peptide (connecting region)); that stretch reads SFRNSSLNQE…PDNIAAWYLR (823 aa). N-linked (GlcNAc...) asparagine glycans are attached at residues N745, N756, N774, and N780. The tract at residues 814–844 is disordered; sequence LEHAGLDKNSALNPPMAEHSSPYSEDPREDH. 3 N-linked (GlcNAc...) asparagine glycosylation sites follow: N902, N952, and N964. The span at 954 to 969 shows a compositional bias: polar residues; that stretch reads TVNKLPNSPQNDSRTW. The tract at residues 954 to 1039 is disordered; sequence TVNKLPNSPQ…PLSPRSFHPL (86 aa). Residues 995-1009 are compositionally biased toward basic and acidic residues; it reads PLQDRQDRRNSRLKE. N-linked (GlcNAc...) asparagine glycans are attached at residues N1044, N1053, N1062, N1071, N1078, and N1094. 2 disordered regions span residues 1084-1162 and 1195-1471; these read SLPD…IPNY and QPSI…FGQT. 2 stretches are compositionally biased toward polar residues: residues 1091-1103 and 1127-1160; these read TSPN…TSSP and THST…SQIP. 30 repeat units span residues 1124–1137, 1138–1151, 1188–1196, 1197–1205, 1206–1214, 1215–1223, 1224–1232, 1233–1241, 1242–1250, 1251–1259, 1260–1268, 1269–1277, 1278–1286, 1287–1295, 1296–1304, 1305–1313, 1314–1322, 1323–1331, 1332–1340, 1341–1349, 1350–1358, 1359–1367, 1368–1376, 1377–1385, 1386–1394, 1395–1403, 1404–1412, 1413–1421, 1422–1430, and 1431–1439. A 2 X 14 AA tandem repeats region spans residues 1124-1151; the sequence is SDPTHSTTAPSNRSPDPTHSTTAPSNRS. The tract at residues 1188 to 1453 is 30 X 9 AA approximate tandem repeats of [AS]-L-S-P-D-[LP]-[GS]-Q-[TE]; sequence ATSLDLSQPS…TSPPLDLNQT (266 aa). Polar residues-rich tracts occupy residues 1214–1234, 1241–1252, 1259–1270, 1286–1306, 1313–1324, 1331–1352, 1367–1388, and 1403–1414; these read ESLS…QESL, TALSPDPSQESL, TALS…TSLS, and TALSPDLSQESL. Positions 1422 to 1441 are enriched in low complexity; that stretch reads PLSPDLSLESLSPDLSQLDL. The stretch at 1440 to 1444 is one 2-29; truncated repeat; that stretch reads DLKQT. A compositionally biased stretch (polar residues) spans 1442–1463; that stretch reads KQTSPPLDLNQTSHTSESSQSL. Residues 1445–1453 form a 2-30 repeat; sequence SPPLDLNQT. Residues N1451 and N1490 are each glycosylated (N-linked (GlcNAc...) asparagine). A sulfotyrosine mark is found at Y1513, Y1529, Y1537, and Y1541. 2 N-linked (GlcNAc...) asparagine glycosylation sites follow: N1550 and N1690. 2 Plastocyanin-like domains span residues 1569-1738 and 1748-1890; these read NRKY…LLIC and NMPV…FLIV. Residues 1569-1890 enclose the F5/8 type A 3 domain; sequence NRKYYYIAAE…AGMQTPFLIV (322 aa). A disulfide bridge connects residues C1712 and C1738. Cu cation contacts are provided by H1830 and H1832. Residue N1839 is glycosylated (N-linked (GlcNAc...) asparagine). Position 1872 (D1872) interacts with Cu cation. Intrachain disulfides connect C1894-C2048 and C2053-C2208. F5/8 type C domains are found at residues 1894-2048 and 2053-2208; these read CKMP…LQGC and CSTP…LFGC. 2 N-linked (GlcNAc...) asparagine glycosylation sites follow: N1997 and N2196.

This sequence belongs to the multicopper oxidase family. In terms of assembly, factor Va, the activated form of factor V, is composed of a heavy chain and a light chain, non-covalently bound. The interaction between the two chains is calcium-dependent. Forms heterodimer with SERPINA5. Post-translationally, thrombin activates factor V proteolytically to the active cofactor, factor Va (formation of a heavy chain at the N-terminus and a light chain at the C-terminus). In terms of processing, sulfation is required for efficient thrombin cleavage and activation and for full procoagulant activity. Activated protein C inactivates factor V and factor Va by proteolytic degradation.

The protein localises to the secreted. Inhibited by SERPINA5. Functionally, central regulator of hemostasis. It serves as a critical cofactor for the prothrombinase activity of factor Xa that results in the activation of prothrombin to thrombin. This Bos taurus (Bovine) protein is Coagulation factor V (F5).